Here is a 439-residue protein sequence, read N- to C-terminus: Acyl-lipid (8-3)-desaturase (439 aa).

Positions 7–88 (GRSAAREMTA…LPKLDASKVE (82 aa)) constitute a Cytochrome b5 heme-binding domain. 2 residues coordinate heme: His40 and His66. A helical membrane pass occupies residues 123–143 (IPHMIYRVVEIVALFALSFWL). Positions 171 to 175 (HEMGH) match the Histidine box-1 motif. A Histidine box-2 motif is present at residues 208–213 (HSKHHA). Helical transmembrane passes span 254–274 (AYLF…LYLH), 287–307 (FVWI…LGYS), and 312–332 (VGMY…QFAV). A Histidine box-3 motif is present at residues 376–380 (QIEHH).

The protein belongs to the fatty acid desaturase type 1 family. The cofactor is Fe(2+).

Its subcellular location is the membrane. The enzyme catalyses an (8Z,11Z,14Z)-icosatrienoyl-containing glycerolipid + 2 Fe(II)-[cytochrome b5] + O2 + 2 H(+) = (5Z,8Z,11Z,14Z)-eicosatetraenoyl-containing glycerolipid + 2 Fe(III)-[cytochrome b5] + 2 H2O. The catalysed reaction is an (8Z,11Z,14Z,17Z)-eicosatetraenoyl-containing glycerolipid + 2 Fe(II)-[cytochrome b5] + O2 + 2 H(+) = a (5Z,8Z,11Z,14Z,17Z)-eicosapentaenoyl-containing glycerolipid + 2 Fe(III)-[cytochrome b5] + 2 H2O. In terms of biological role, fatty acid desaturase that introduces a cis double bond at the 5-position in 20-carbon polyunsaturated fatty acids incorporated in a glycerolipid that contain a Delta(8) double bond. The polypeptide is Acyl-lipid (8-3)-desaturase (Thraustochytrium sp).